Consider the following 213-residue polypeptide: MTSKKSYKSYFFDPLWSNNQILIAILGICSALAVTTTVQTAITMGIAVSIVTGCSSFFVSLLRKFTPDSVRMITQLIIISLFVIVIDQFLKAFFFDISKTLSVFVGLIITNCIVMGRSESLARHVTPIPAFLDGFASGLGYGWVLLVIGVIRELFGFGTLMGFRIIPQFVYASETHPDGYQNLSLMVLAPSAFFLLGIMIWLVNIRDSKKRKR.

Helical transmembrane passes span 21 to 41 (ILIA…VQTA), 42 to 62 (ITMG…VSLL), 77 to 97 (IIIS…FFDI), 101 to 121 (LSVF…SESL), 131 to 151 (FLDG…IGVI), 153 to 173 (ELFG…VYAS), and 183 to 203 (LSLM…IWLV).

This sequence belongs to the NqrDE/RnfAE family. As to quaternary structure, composed of six subunits; NqrA, NqrB, NqrC, NqrD, NqrE and NqrF.

It is found in the cell inner membrane. It catalyses the reaction a ubiquinone + n Na(+)(in) + NADH + H(+) = a ubiquinol + n Na(+)(out) + NAD(+). In terms of biological role, NQR complex catalyzes the reduction of ubiquinone-1 to ubiquinol by two successive reactions, coupled with the transport of Na(+) ions from the cytoplasm to the periplasm. NqrA to NqrE are probably involved in the second step, the conversion of ubisemiquinone to ubiquinol. The protein is Na(+)-translocating NADH-quinone reductase subunit D of Chlamydia pneumoniae (Chlamydophila pneumoniae).